The chain runs to 248 residues: Gamma-interferon-inducible lysosomal thiol reductase (248 aa).

Residues 1 to 26 form the signal peptide; it reads MSWSPILPFLSLLLLLFPLEVPRAAT. A propeptide spans 27–54 (removed in mature form); it reads ASLSQASSEGTTTCKAHDVCLLGPRPLP. Cys-69 and Cys-72 form a disulfide bridge. N-linked (GlcNAc...) asparagine glycans are attached at residues Asn-92 and Asn-105. The propeptide at 231–248 is removed in mature form; that stretch reads KPDICSSIADSPRKVCYK.

Belongs to the GILT family. As to quaternary structure, dimer; disulfide-linked. In terms of processing, N-glycosylated. Sugar chains contain mannose-6-phosphate. Synthesized as a 35 kDa precursor which is then processed into the mature 30 kDa form via cleavage of N-terminal and C-terminal propeptides. Processing of the precursor is mediated by multiple lysosomal proteases.

It is found in the secreted. The protein resides in the lysosome. In terms of biological role, lysosomal thiol reductase that can reduce protein disulfide bonds. May facilitate the complete unfolding of proteins destined for lysosomal degradation. Plays an important role in antigen processing. Facilitates the generation of MHC class II-restricted epitodes from disulfide bond-containing antigen by the endocytic reduction of disulfide bonds. Also facilitates MHC class I-restricted recognition of exogenous antigens containing disulfide bonds by CD8+ T-cells or crosspresentation. This is Gamma-interferon-inducible lysosomal thiol reductase (Ifi30) from Mus musculus (Mouse).